Reading from the N-terminus, the 371-residue chain is MNSCFIILAGGESKRFNSNTPKPYTNYKGKPLLLHSIDKAKVFNKFNKIVLVVNKKHKNFIKKLNIKNIRIITGGKTRAESAYNALKSIKENNFKNVIIHDAARPNFSLKLLNKLMNELKLNDCVIPAIQTADTVKQKISNNVKNLKRENIYLIQTPQAFNYKKLFELQNNKSEEVTDDANLFVRAGKKIKIIKGETTNNKITINSDIKFNNLIKFGIGFDVHRLVPNKKLYLGGVKIPSPIGTLGHSDGDPVLHAVTDAILGACSMGDIGEKFSDKNKKFKNIRSTILLSEIIKQTLKKGYLINNLDINIITQKPKIQKYKKQILNCIAKICNISPTQINIKGKTTEKLGVIGKEKAIACEVIASVIKND.

The tract at residues Met-1–Ile-214 is 2-C-methyl-D-erythritol 4-phosphate cytidylyltransferase. A 2-C-methyl-D-erythritol 2,4-cyclodiphosphate synthase region spans residues Lys-215–Asp-371. Positions 221 and 223 each coordinate a divalent metal cation. Residues Asp-221 to His-223 and His-247 to Ser-248 contribute to the 4-CDP-2-C-methyl-D-erythritol 2-phosphate site. His-255 lines the a divalent metal cation pocket. 4-CDP-2-C-methyl-D-erythritol 2-phosphate-binding positions include Asp-269 to Gly-271, Phe-274 to Asn-278, and Lys-355.

In the N-terminal section; belongs to the IspD/TarI cytidylyltransferase family. IspD subfamily. This sequence in the C-terminal section; belongs to the IspF family. It depends on a divalent metal cation as a cofactor.

It catalyses the reaction 2-C-methyl-D-erythritol 4-phosphate + CTP + H(+) = 4-CDP-2-C-methyl-D-erythritol + diphosphate. The enzyme catalyses 4-CDP-2-C-methyl-D-erythritol 2-phosphate = 2-C-methyl-D-erythritol 2,4-cyclic diphosphate + CMP. It functions in the pathway isoprenoid biosynthesis; isopentenyl diphosphate biosynthesis via DXP pathway; isopentenyl diphosphate from 1-deoxy-D-xylulose 5-phosphate: step 2/6. It participates in isoprenoid biosynthesis; isopentenyl diphosphate biosynthesis via DXP pathway; isopentenyl diphosphate from 1-deoxy-D-xylulose 5-phosphate: step 4/6. Bifunctional enzyme that catalyzes the formation of 4-diphosphocytidyl-2-C-methyl-D-erythritol from CTP and 2-C-methyl-D-erythritol 4-phosphate (MEP) (IspD), and catalyzes the conversion of 4-diphosphocytidyl-2-C-methyl-D-erythritol 2-phosphate (CDP-ME2P) to 2-C-methyl-D-erythritol 2,4-cyclodiphosphate (ME-CPP) with a corresponding release of cytidine 5-monophosphate (CMP) (IspF). The chain is Bifunctional enzyme IspD/IspF from Pelagibacter ubique (strain HTCC1062).